The sequence spans 141 residues: Acetyltransferase YpeA (141 aa).

Residues 1-141 (MEIRVFRQED…GKRLIEDEEY (141 aa)) form the N-acetyltransferase domain.

The protein belongs to the acetyltransferase family. YpeA subfamily.

In Salmonella choleraesuis (strain SC-B67), this protein is Acetyltransferase YpeA.